The chain runs to 240 residues: Uridylate kinase (240 aa).

Lysine 12–glycine 15 lines the ATP pocket. Positions glycine 20–glycine 25 are involved in allosteric activation by GTP. Glycine 54 lines the UMP pocket. ATP-binding residues include glycine 55 and arginine 59. Residues aspartate 74 and threonine 135–threonine 142 contribute to the UMP site. Asparagine 163, tyrosine 169, and aspartate 172 together coordinate ATP.

The protein belongs to the UMP kinase family. In terms of assembly, homohexamer.

It localises to the cytoplasm. It catalyses the reaction UMP + ATP = UDP + ADP. It participates in pyrimidine metabolism; CTP biosynthesis via de novo pathway; UDP from UMP (UMPK route): step 1/1. Its activity is regulated as follows. Allosterically activated by GTP. Inhibited by UTP. Its function is as follows. Catalyzes the reversible phosphorylation of UMP to UDP. The sequence is that of Uridylate kinase from Geobacillus thermodenitrificans (strain NG80-2).